The primary structure comprises 506 residues: Maturase K (506 aa).

Belongs to the intron maturase 2 family. MatK subfamily.

It is found in the plastid. It localises to the chloroplast. In terms of biological role, usually encoded in the trnK tRNA gene intron. Probably assists in splicing its own and other chloroplast group II introns. The sequence is that of Maturase K from Prunus dulcis (Almond).